Reading from the N-terminus, the 485-residue chain is tRNA sulfurtransferase (485 aa).

The THUMP domain maps to 61 to 165; the sequence is EELIALLQRI…DDKMMLVKAR (105 aa). Residues 183–184, Lys-265, Gly-287, and Gln-296 each bind ATP; that span reads LI. A disulfide bridge links Cys-344 with Cys-456. A Rhodanese domain is found at 404–483; it reads LGENEVILDI…FSNVRVFAKN (80 aa). Cys-456 acts as the Cysteine persulfide intermediate in catalysis.

This sequence belongs to the ThiI family.

The protein localises to the cytoplasm. It carries out the reaction [ThiI sulfur-carrier protein]-S-sulfanyl-L-cysteine + a uridine in tRNA + 2 reduced [2Fe-2S]-[ferredoxin] + ATP + H(+) = [ThiI sulfur-carrier protein]-L-cysteine + a 4-thiouridine in tRNA + 2 oxidized [2Fe-2S]-[ferredoxin] + AMP + diphosphate. The enzyme catalyses [ThiS sulfur-carrier protein]-C-terminal Gly-Gly-AMP + S-sulfanyl-L-cysteinyl-[cysteine desulfurase] + AH2 = [ThiS sulfur-carrier protein]-C-terminal-Gly-aminoethanethioate + L-cysteinyl-[cysteine desulfurase] + A + AMP + 2 H(+). It functions in the pathway cofactor biosynthesis; thiamine diphosphate biosynthesis. Catalyzes the ATP-dependent transfer of a sulfur to tRNA to produce 4-thiouridine in position 8 of tRNAs, which functions as a near-UV photosensor. Also catalyzes the transfer of sulfur to the sulfur carrier protein ThiS, forming ThiS-thiocarboxylate. This is a step in the synthesis of thiazole, in the thiamine biosynthesis pathway. The sulfur is donated as persulfide by IscS. This Haemophilus influenzae (strain PittGG) protein is tRNA sulfurtransferase.